The primary structure comprises 1002 residues: ATP-dependent DNA helicase MPH1 (1002 aa).

The 168-residue stretch at Ile-108 to Lys-275 folds into the Helicase ATP-binding domain. Ile-121–Thr-128 lines the ATP pocket. A DEAH box motif is present at residues Asp-223–His-226. The 164-residue stretch at Asp-506 to Ile-669 folds into the Helicase C-terminal domain. Positions Glu-531–Gly-551 are enriched in basic and acidic residues. Disordered stretches follow at residues Glu-531–Gln-569 and Ala-799–Thr-843. The segment covering Arg-553–Lys-568 has biased composition (polar residues).

The protein belongs to the DEAD box helicase family. DEAH subfamily. FANCM sub-subfamily. In terms of assembly, interacts with the MHF histone-fold complex to form the FANCM-MHF complex.

The protein resides in the nucleus. The catalysed reaction is ATP + H2O = ADP + phosphate + H(+). Its function is as follows. ATP-dependent DNA helicase involved in DNA damage repair by homologous recombination and in genome maintenance. Capable of unwinding D-loops. Plays a role in limiting crossover recombinants during mitotic DNA double-strand break (DSB) repair. Component of a FANCM-MHF complex which promotes gene conversion at blocked replication forks, probably by reversal of the stalled fork. This is ATP-dependent DNA helicase MPH1 from Kluyveromyces lactis (strain ATCC 8585 / CBS 2359 / DSM 70799 / NBRC 1267 / NRRL Y-1140 / WM37) (Yeast).